A 349-amino-acid polypeptide reads, in one-letter code: Cyclic AMP-dependent transcription factor ATF-4 (349 aa).

Disordered regions lie at residues 49 to 75, 204 to 271, and 279 to 298; these read FSSD…TGKE, PPCV…TAKV, and KLKK…QKKR. P60 bears the 4-hydroxyproline mark. T212 carries the phosphothreonine modification. 5 positions are modified to phosphoserine: S214, S218, S223, S230, and S234. Positions 214–223 match the BetaTrCP degron motif motif; that stretch reads SDNDSGICMS. Residues 229 to 239 show a composition bias toward polar residues; it reads GSPQHSPSTSR. Residue P235 is modified to 4-hydroxyproline. A Phosphoserine modification is found at S247. Phosphoserine; by RPS6KA3 is present on S251. Residues K258 and K270 each participate in a glycyl lysine isopeptide (Lys-Gly) (interchain with G-Cter in SUMO2) cross-link. Residues 276-339 form the bZIP domain; it reads LDKKLKKMEQ…QYLKDLIEEV (64 aa). The tract at residues 278–298 is basic motif; it reads KKLKKMEQNKTAATRYRQKKR. Residues 303–339 form an interaction with GABBR1 region; it reads ALTGECKELEKKNEALKEKADSLAKEIQYLKDLIEEV. A leucine-zipper region spans residues 304 to 332; sequence LTGECKELEKKNEALKEKADSLAKEIQYL. K309 carries the post-translational modification N6-acetyllysine.

This sequence belongs to the bZIP family. Binds DNA as a homodimer and as a heterodimer. Heterodimer; heterodimerizes with CEBPB. Heterodimer; heterodimerizes with DDIT3/CHOP. Interacts with CEP290 (via an N-terminal region). Interacts with NEK6, DAPK2 (isoform 2) and ZIPK/DAPK3. Interacts (via its leucine zipper domain) with GABBR1 and GABBR2 (via their C-termini). Forms a heterodimer with TXLNG in osteoblasts. Interacts (via its DNA binding domain) with FOXO1 (C-terminal half); the interaction occurs in osteoblasts and regulates glucose homeostasis through suppression of beta-cell proliferation and a decrease in insulin production. Interacts with SATB2; the interaction results in enhanced DNA binding and transactivation by these transcription factors. Interacts with ABRAXAS2. Interacts with TRIB3, inhibiting the transactivation activity of ATF4. Interacts with DISC1; which inhibits ATF4 transcription factor activity by disrupting ATF4 dimerization and DNA-binding. Interacts with EP300/p300; EP300/p300 stabilizes ATF4 and increases its transcriptional activity independently of its catalytic activity by preventing its ubiquitination. Post-translationally, ubiquitinated by SCF(BTRC) in response to mTORC1 signal, followed by proteasomal degradation and leading to down-regulate expression of SIRT4. Interaction with EP300/p300 inhibits ubiquitination by SCF(BTRC). Phosphorylation at Ser-251 by RPS6KA3/RSK2 in osteoblasts enhances transactivation activity and promotes osteoblast differentiation. Phosphorylated on the betaTrCP degron motif at Ser-218, followed by phosphorylation at Thr-212, Ser-223, Ser-230, Ser-234 and Ser-247, promoting interaction with BTRC and ubiquitination. Phosphorylation is promoted by mTORC1. Phosphorylation at Ser-214 by CK2 decreases its stability. Phosphorylated by NEK6. In terms of processing, hydroxylated by PHD3, leading to decreased protein stability. In terms of tissue distribution, ubiquitously expressed in adults.

The protein localises to the nucleus. Its subcellular location is the nucleus speckle. It is found in the cytoplasm. It localises to the cell membrane. The protein resides in the cytoskeleton. The protein localises to the microtubule organizing center. Its subcellular location is the centrosome. Functionally, transcription factor that binds the cAMP response element (CRE) (consensus: 5'-GTGACGT[AC][AG]-3') and displays two biological functions, as regulator of metabolic and redox processes under normal cellular conditions, and as master transcription factor during integrated stress response (ISR). Binds to asymmetric CRE's as a heterodimer and to palindromic CRE's as a homodimer. Core effector of the ISR, which is required for adaptation to various stress such as endoplasmic reticulum (ER) stress, amino acid starvation, mitochondrial stress or oxidative stress. During ISR, ATF4 translation is induced via an alternative ribosome translation re-initiation mechanism in response to EIF2S1/eIF-2-alpha phosphorylation, and stress-induced ATF4 acts as a master transcription factor of stress-responsive genes in order to promote cell recovery. Promotes the transcription of genes linked to amino acid sufficiency and resistance to oxidative stress to protect cells against metabolic consequences of ER oxidation. Activates the transcription of NLRP1, possibly in concert with other factors in response to ER stress. Activates the transcription of asparagine synthetase (ASNS) in response to amino acid deprivation or ER stress. However, when associated with DDIT3/CHOP, the transcriptional activation of the ASNS gene is inhibited in response to amino acid deprivation. Together with DDIT3/CHOP, mediates programmed cell death by promoting the expression of genes involved in cellular amino acid metabolic processes, mRNA translation and the terminal unfolded protein response (terminal UPR), a cellular response that elicits programmed cell death when ER stress is prolonged and unresolved. Activates the expression of COX7A2L/SCAF1 downstream of the EIF2AK3/PERK-mediated unfolded protein response, thereby promoting formation of respiratory chain supercomplexes and increasing mitochondrial oxidative phosphorylation. Together with DDIT3/CHOP, activates the transcription of the IRS-regulator TRIB3 and promotes ER stress-induced neuronal cell death by regulating the expression of BBC3/PUMA in response to ER stress. May cooperate with the UPR transcriptional regulator QRICH1 to regulate ER protein homeostasis which is critical for cell viability in response to ER stress. In the absence of stress, ATF4 translation is at low levels and it is required for normal metabolic processes such as embryonic lens formation, fetal liver hematopoiesis, bone development and synaptic plasticity. Acts as a regulator of osteoblast differentiation in response to phosphorylation by RPS6KA3/RSK2: phosphorylation in osteoblasts enhances transactivation activity and promotes expression of osteoblast-specific genes and post-transcriptionally regulates the synthesis of Type I collagen, the main constituent of the bone matrix. Cooperates with FOXO1 in osteoblasts to regulate glucose homeostasis through suppression of beta-cell production and decrease in insulin production. Activates transcription of SIRT4. Regulates the circadian expression of the core clock component PER2 and the serotonin transporter SLC6A4. Binds in a circadian time-dependent manner to the cAMP response elements (CRE) in the SLC6A4 and PER2 promoters and periodically activates the transcription of these genes. Mainly acts as a transcriptional activator in cellular stress adaptation, but it can also act as a transcriptional repressor: acts as a regulator of synaptic plasticity by repressing transcription, thereby inhibiting induction and maintenance of long-term memory. Regulates synaptic functions via interaction with DISC1 in neurons, which inhibits ATF4 transcription factor activity by disrupting ATF4 dimerization and DNA-binding. The chain is Cyclic AMP-dependent transcription factor ATF-4 from Mus musculus (Mouse).